The sequence spans 156 residues: MKIIEGKLALSGKEKIAIINARFNHIVTDRLVEGARDAFLRHGGDEANLSLILVPGAFEIPMALEKALASGKFDAVCCVGAVIRGSTPHFDYVSAETTKGIANVTLKYGKPVSFGVLTVDNIEQAIERAGSKAGNKGFEAMTGVIEMLNLYKNLGA.

5-amino-6-(D-ribitylamino)uracil is bound by residues Phe-23, Ala-57–Glu-59, and Ala-81–Ile-83. Ser-86–Thr-87 serves as a coordination point for (2S)-2-hydroxy-3-oxobutyl phosphate. The active-site Proton donor is the His-89. Phe-114 is a 5-amino-6-(D-ribitylamino)uracil binding site. A (2S)-2-hydroxy-3-oxobutyl phosphate-binding site is contributed by Arg-128.

The protein belongs to the DMRL synthase family.

It catalyses the reaction (2S)-2-hydroxy-3-oxobutyl phosphate + 5-amino-6-(D-ribitylamino)uracil = 6,7-dimethyl-8-(1-D-ribityl)lumazine + phosphate + 2 H2O + H(+). Its pathway is cofactor biosynthesis; riboflavin biosynthesis; riboflavin from 2-hydroxy-3-oxobutyl phosphate and 5-amino-6-(D-ribitylamino)uracil: step 1/2. Functionally, catalyzes the formation of 6,7-dimethyl-8-ribityllumazine by condensation of 5-amino-6-(D-ribitylamino)uracil with 3,4-dihydroxy-2-butanone 4-phosphate. This is the penultimate step in the biosynthesis of riboflavin. In Campylobacter curvus (strain 525.92), this protein is 6,7-dimethyl-8-ribityllumazine synthase.